The sequence spans 305 residues: Putative monooxygenase p33MONOX (305 aa).

Disordered regions lie at residues 1-20 and 37-56; these read MASR…LGKM and LEDP…VPWK. At T44 the chain carries Phosphothreonine. Positions 67-77 match the Flavin-containing monooxygenase motif motif; the sequence is LAKVEEGEASL. The tract at residues 159–305 is disordered; the sequence is SGEITKEERQ…DLNVLTPTGF (147 aa). Low complexity predominate over residues 169 to 183; sequence PASAQSTPSTTPHSS. T175 carries the post-translational modification Phosphothreonine. Phosphoserine is present on residues S182 and S183. 2 stretches are compositionally biased toward polar residues: residues 191 to 210 and 233 to 243; these read WFTS…TMDS and KYDSGSSTTQA.

The protein belongs to the P33MONOX family. Interacts with NELFB, NOL12 and PRNP.

The protein resides in the cytoplasm. In terms of biological role, potential NADPH-dependent oxidoreductase. May be involved in the regulation of neuronal survival, differentiation and axonal outgrowth. The protein is Putative monooxygenase p33MONOX (P33MONOX) of Pongo abelii (Sumatran orangutan).